The following is a 291-amino-acid chain: Regulator of rDNA transcription protein 5 (291 aa).

In terms of domain architecture, RRM 1 spans 21 to 104 (KRIYISNLDF…RTLKIKMYVP (84 aa)). A disordered region spans residues 109 to 151 (ARAERRKEKRKVPAPQAEENPDAAPQDAQQPQPPAPAEEPTSK). Residues 152–235 (DTVYCAYLPS…KKITLRPARL (84 aa)) enclose the RRM 2 domain. Positions 271-291 (HRQQEAEIPAAETPDDVAATA) are disordered.

It belongs to the RRT5 family.

May be involved in the modulation of rDNA transcription. This Lachancea thermotolerans (strain ATCC 56472 / CBS 6340 / NRRL Y-8284) (Yeast) protein is Regulator of rDNA transcription protein 5 (RRT5).